Consider the following 148-residue polypeptide: MEFIVYLAGEIHSNWREEIKEKTKSLKLPITFVGPMENHDRSDNIGEEIMGVQPNAVLKDDKASDINNFRTAVLMNKADFVIALFGEKYKQWNTAMDASYAIAKGKPLIIIRPESLHHPLKELSNKANITVETVNQAIKALSYLFETE.

This is an uncharacterized protein from Bacillus subtilis (strain 168).